The sequence spans 141 residues: MRHYEIIFLVHPDQSEQVGGMVERYTKLIEEDGGKIHRLEDWGRRQLAYAINNVHKAHYVMLNVECTGKALAELEDNFRYNDAVIRNLVIRRDEAVTGPSEMLKAEENRSERRERRERPEHADGAEGDDSNDSDNSDNADE.

The interval 96–141 (VTGPSEMLKAEENRSERRERRERPEHADGAEGDDSNDSDNSDNADE) is disordered. The span at 103–124 (LKAEENRSERRERRERPEHADG) shows a compositional bias: basic and acidic residues. Over residues 125-141 (AEGDDSNDSDNSDNADE) the composition is skewed to acidic residues.

This sequence belongs to the bacterial ribosomal protein bS6 family.

In terms of biological role, binds together with bS18 to 16S ribosomal RNA. The protein is Small ribosomal subunit protein bS6 of Pseudomonas entomophila (strain L48).